Consider the following 383-residue polypeptide: Xylose/arabinose import ATP-binding protein XacJ (383 aa).

Residues 4-235 enclose the ABC transporter domain; sequence IQLTDLTKRF…PNNLFVAEFI (232 aa). An ATP-binding site is contributed by 36-43; that stretch reads GPSGCGKS.

Belongs to the ABC transporter superfamily. Carbohydrate uptake transporter-1 (CUT1) (TC 3.A.1.1) family. The complex is composed of two ATP-binding proteins (XacJ and XacK), two transmembrane proteins (XacH and XacI) and a solute-binding protein (XacG).

It localises to the cell membrane. It carries out the reaction D-xylose(out) + ATP + H2O = D-xylose(in) + ADP + phosphate + H(+). The enzyme catalyses L-arabinose(out) + ATP + H2O = L-arabinose(in) + ADP + phosphate + H(+). Its function is as follows. Part of the ABC transporter complex XacGHIJK involved in the uptake of xylose and arabinose. Responsible for energy coupling to the transport system. This chain is Xylose/arabinose import ATP-binding protein XacJ, found in Haloferax volcanii (strain ATCC 29605 / DSM 3757 / JCM 8879 / NBRC 14742 / NCIMB 2012 / VKM B-1768 / DS2) (Halobacterium volcanii).